The sequence spans 743 residues: Adhesion defective protein 2 (743 aa).

Residues 1–36 (MADPGLRSGVGLPSQQGQKHDLQKDQKQPHVNNADR) are disordered. A compositionally biased stretch (basic and acidic residues) spans 18-28 (QKHDLQKDQKQ). The LisH domain occupies 38 to 70 (TQSLLNSYIYDYLIKKDYCEAARAFGREAQVQT). Disordered regions lie at residues 79 to 127 (NSLA…PPPP), 264 to 361 (LQSV…QYPV), 379 to 426 (RNPH…YGFS), and 476 to 692 (KERK…KSSD). Ser89 bears the Phosphoserine mark. Over residues 98–114 (ISNNESSDENMNVNNGN) the composition is skewed to polar residues. Residues 264–281 (LQSVQQQQKQHQQKKTPQ) show a composition bias toward low complexity. Composition is skewed to polar residues over residues 282 to 297 (SGST…QPTT), 315 to 353 (IPSS…DTTG), 390 to 399 (PSSTLPQQQK), 408 to 426 (QQPS…YGFS), and 482 to 500 (TSAS…SSVA). Over residues 501 to 520 (KTKSTTPKSTDTPTEATTSP) the composition is skewed to low complexity. Polar residues-rich tracts occupy residues 521–544 (VKVS…NMPM) and 556–566 (DHPSNYSNLIE). The span at 567 to 578 (NSSTSDTNNADN) shows a compositional bias: low complexity. A compositionally biased stretch (polar residues) spans 586–602 (WQLQQTHSSRPTPNASS). The span at 612–631 (PSSANSNAPTPAPTVNTTNP) shows a compositional bias: low complexity. Over residues 661-670 (DNQNQSGKSN) the composition is skewed to polar residues. The span at 671–688 (PDTSATPSAPTESTTVAT) shows a compositional bias: low complexity.

This sequence belongs to the FLO8 family.

Its subcellular location is the cytoplasm. The protein resides in the nucleus. Its function is as follows. Probable transcriptional regulator involved in cell adhesion. The protein is Adhesion defective protein 2 (adn2) of Schizosaccharomyces pombe (strain 972 / ATCC 24843) (Fission yeast).